We begin with the raw amino-acid sequence, 82 residues long: Small ribosomal subunit protein bS16 (82 aa).

The protein belongs to the bacterial ribosomal protein bS16 family.

This is Small ribosomal subunit protein bS16 from Proteus mirabilis (strain HI4320).